The chain runs to 505 residues: Maturase K (505 aa).

Belongs to the intron maturase 2 family. MatK subfamily.

The protein localises to the plastid. It localises to the chloroplast. Usually encoded in the trnK tRNA gene intron. Probably assists in splicing its own and other chloroplast group II introns. In Kunzea ericoides (White teatree), this protein is Maturase K.